The primary structure comprises 61 residues: Short neurotoxin 1 (61 aa).

Disulfide bonds link Cys-3–Cys-23, Cys-17–Cys-40, Cys-42–Cys-53, and Cys-54–Cys-59.

Belongs to the three-finger toxin family. Short-chain subfamily. Type I alpha-neurotoxin sub-subfamily. In terms of tissue distribution, expressed by the venom gland.

The protein resides in the secreted. Functionally, binds with high affinity to muscular nicotinic acetylcholine receptors (nAChRs) (tested on Torpedo marmorata AChR, Kd=0.07 nM) and with low affinity to neuronal alpha-7/CHRNA7 nAChRs (tested on chimeric receptor, Kd=3 uM) and inhibit acetylcholine from binding to the receptor, thereby impairing neuromuscular transmission. Produces peripheral paralysis by blocking neuromuscular transmission at the postsynaptic site. This Naja pallida (Red spitting cobra) protein is Short neurotoxin 1.